The following is an 80-amino-acid chain: Acyl carrier protein (80 aa).

The region spanning 4–79 (EEILQKVCSI…DAVKFIEEKK (76 aa)) is the Carrier domain. S39 bears the O-(pantetheine 4'-phosphoryl)serine mark.

This sequence belongs to the acyl carrier protein (ACP) family. In terms of processing, 4'-phosphopantetheine is transferred from CoA to a specific serine of apo-ACP by AcpS. This modification is essential for activity because fatty acids are bound in thioester linkage to the sulfhydryl of the prosthetic group.

The protein localises to the cytoplasm. Its pathway is lipid metabolism; fatty acid biosynthesis. In terms of biological role, carrier of the growing fatty acid chain in fatty acid biosynthesis. The sequence is that of Acyl carrier protein from Prochlorococcus marinus subsp. pastoris (strain CCMP1986 / NIES-2087 / MED4).